The sequence spans 92 residues: Small ribosomal subunit protein uS19c (92 aa).

Belongs to the universal ribosomal protein uS19 family.

The protein resides in the plastid. It localises to the chloroplast. Its function is as follows. Protein S19 forms a complex with S13 that binds strongly to the 16S ribosomal RNA. The protein is Small ribosomal subunit protein uS19c of Piper cenocladum (Ant piper).